The primary structure comprises 427 residues: Sialic acid TRAP transporter large permease protein SiaM (427 aa).

The next 12 helical transmembrane spans lie at 11–31 (LLFA…AFLI), 52–72 (FTLL…SAGI), 82–102 (SLVG…SLLF), 140–160 (ASCI…YGVV), 165–185 (IGAL…ALMV), 214–234 (AFLS…GKFT), 246–266 (ALFL…IEIL), 270–290 (VNTT…GWIV), 301–321 (DYFL…NLLL), 322–342 (LFLG…PFLV), 348–368 (VGID…IGIL), and 394–414 (VLPL…FPQF).

The protein belongs to the TRAP transporter large permease family. The complex comprises the extracytoplasmic solute receptor protein SiaP, and the two transmembrane proteins SiaQ and SiaM. SiaQ and SiaM form a tight 1:1 complex.

It is found in the cell inner membrane. Part of the tripartite ATP-independent periplasmic (TRAP) transport system SiaPQM that catalyzes unidirectional Na(+)-dependent sialic acid uptake. The sequence is that of Sialic acid TRAP transporter large permease protein SiaM from Vibrio cholerae serotype O1 (strain ATCC 39315 / El Tor Inaba N16961).